The sequence spans 341 residues: tRNA N6-adenosine threonylcarbamoyltransferase (341 aa).

Fe cation-binding residues include His115 and His119. Residues 138–142 (VVSGG), Asp171, Gly184, Asp188, and Asn279 each bind substrate. Fe cation is bound at residue Asp307.

It belongs to the KAE1 / TsaD family. Requires Fe(2+) as cofactor.

Its subcellular location is the cytoplasm. It catalyses the reaction L-threonylcarbamoyladenylate + adenosine(37) in tRNA = N(6)-L-threonylcarbamoyladenosine(37) in tRNA + AMP + H(+). Its function is as follows. Required for the formation of a threonylcarbamoyl group on adenosine at position 37 (t(6)A37) in tRNAs that read codons beginning with adenine. Is involved in the transfer of the threonylcarbamoyl moiety of threonylcarbamoyl-AMP (TC-AMP) to the N6 group of A37, together with TsaE and TsaB. TsaD likely plays a direct catalytic role in this reaction. The protein is tRNA N6-adenosine threonylcarbamoyltransferase of Clostridium kluyveri (strain NBRC 12016).